Here is a 316-residue protein sequence, read N- to C-terminus: Methionyl-tRNA formyltransferase (316 aa).

(6S)-5,6,7,8-tetrahydrofolate is bound at residue 112-115 (SLLP).

The protein belongs to the Fmt family.

It catalyses the reaction L-methionyl-tRNA(fMet) + (6R)-10-formyltetrahydrofolate = N-formyl-L-methionyl-tRNA(fMet) + (6S)-5,6,7,8-tetrahydrofolate + H(+). Functionally, attaches a formyl group to the free amino group of methionyl-tRNA(fMet). The formyl group appears to play a dual role in the initiator identity of N-formylmethionyl-tRNA by promoting its recognition by IF2 and preventing the misappropriation of this tRNA by the elongation apparatus. In Flavobacterium psychrophilum (strain ATCC 49511 / DSM 21280 / CIP 103535 / JIP02/86), this protein is Methionyl-tRNA formyltransferase.